A 383-amino-acid polypeptide reads, in one-letter code: Soluble hydrogenase 42 kDa subunit (383 aa).

Lys194 is subject to N6-(pyridoxal phosphate)lysine.

Belongs to the class-V pyridoxal-phosphate-dependent aminotransferase family. As to quaternary structure, heterodimer of a large and a small subunit. It depends on pyridoxal 5'-phosphate as a cofactor.

It localises to the cytoplasm. Soluble hydrogenase catalyzes both production and consumption of hydrogen from suitable artificial electron donors or acceptors. This subunit catalyzes the tritium-exchange activity. The sequence is that of Soluble hydrogenase 42 kDa subunit from Anabaena cylindrica.